A 504-amino-acid polypeptide reads, in one-letter code: Cytochrome P450 3A1 (504 aa).

Heme is bound at residue cysteine 443.

Belongs to the cytochrome P450 family. Heme serves as cofactor.

It is found in the endoplasmic reticulum membrane. Its subcellular location is the microsome membrane. It carries out the reaction an organic molecule + reduced [NADPH--hemoprotein reductase] + O2 = an alcohol + oxidized [NADPH--hemoprotein reductase] + H2O + H(+). Functionally, cytochromes P450 are a group of heme-thiolate monooxygenases. In liver microsomes, this enzyme is involved in an NADPH-dependent electron transport pathway. It oxidizes a variety of structurally unrelated compounds, including steroids, fatty acids, and xenobiotics. The protein is Cytochrome P450 3A1 (Cyp3a1) of Rattus norvegicus (Rat).